A 398-amino-acid polypeptide reads, in one-letter code: Na(+)/H(+) antiporter NhaA (398 aa).

The next 11 helical transmembrane spans lie at 19 to 39 (IGGI…NSPG), 64 to 84 (LLLW…GLEL), 99 to 119 (IILP…IYLA), 130 to 150 (GWAI…SLLG), 159 to 179 (ILLT…IACF), 182 to 202 (NDIY…LFIV), 222 to 242 (IAML…AMFI), 266 to 286 (ATFI…LTNI), 299 to 319 (IALG…WVGV), 337 to 357 (GMSA…SLAF), and 370 to 390 (LGII…LNKT).

The protein belongs to the NhaA Na(+)/H(+) (TC 2.A.33) antiporter family.

It is found in the cell inner membrane. It catalyses the reaction Na(+)(in) + 2 H(+)(out) = Na(+)(out) + 2 H(+)(in). Na(+)/H(+) antiporter that extrudes sodium in exchange for external protons. The sequence is that of Na(+)/H(+) antiporter NhaA from Desulfotalea psychrophila (strain LSv54 / DSM 12343).